Here is a 184-residue protein sequence, read N- to C-terminus: ATP synthase subunit b, chloroplastic (184 aa).

The chain crosses the membrane as a helical span at residues 27 to 49 (LATNLINLSVVLGVLIFFGKGVL).

This sequence belongs to the ATPase B chain family. F-type ATPases have 2 components, F(1) - the catalytic core - and F(0) - the membrane proton channel. F(1) has five subunits: alpha(3), beta(3), gamma(1), delta(1), epsilon(1). F(0) has four main subunits: a(1), b(1), b'(1) and c(10-14). The alpha and beta chains form an alternating ring which encloses part of the gamma chain. F(1) is attached to F(0) by a central stalk formed by the gamma and epsilon chains, while a peripheral stalk is formed by the delta, b and b' chains.

The protein resides in the plastid. Its subcellular location is the chloroplast thylakoid membrane. Functionally, f(1)F(0) ATP synthase produces ATP from ADP in the presence of a proton or sodium gradient. F-type ATPases consist of two structural domains, F(1) containing the extramembraneous catalytic core and F(0) containing the membrane proton channel, linked together by a central stalk and a peripheral stalk. During catalysis, ATP synthesis in the catalytic domain of F(1) is coupled via a rotary mechanism of the central stalk subunits to proton translocation. Component of the F(0) channel, it forms part of the peripheral stalk, linking F(1) to F(0). The chain is ATP synthase subunit b, chloroplastic from Lactuca sativa (Garden lettuce).